We begin with the raw amino-acid sequence, 342 residues long: MMYNLLRPLLFLLDPETAHTVTLDTLNLLKRTGLLPDRTIDCTPVRVMELDFPNPVGLAAGLDKNGTCISALASLGFGFIEVGTITPRPQVGNPRPRLFRIPQAEAIINRMGFNNVGVDKLIENVQQSGYRGILGINIGKNADTPLQNAIDDYLICLRKVYLHASYVTVNISSPNTQQLRQLQNETELEHLLGALKAEQTRLSDLHGRYTPLAIKIAPDLESEQITVIASLLMKHRMDAVIATNTTTAREGVEHLPRGNEKGGLSGAPLTERSTTVIRQLANHLQHAIPIIGAGGIMSARDAQLKIEAGASLVQIYSGLIYRGPDLVTKTVSLLCSRTTHAG.

Residues 60–64 (AGLDK) and threonine 84 each bind FMN. Lysine 64 contacts substrate. 109-113 (NRMGF) is a binding site for substrate. Asparagine 137 and asparagine 170 together coordinate FMN. Asparagine 170 contacts substrate. Catalysis depends on serine 173, which acts as the Nucleophile. Residue asparagine 175 coordinates substrate. Residues lysine 215 and threonine 243 each coordinate FMN. Position 244 to 245 (244 to 245 (NT)) interacts with substrate. FMN contacts are provided by residues glycine 266, glycine 295, and 316 to 317 (YS).

The protein belongs to the dihydroorotate dehydrogenase family. Type 2 subfamily. Monomer. FMN serves as cofactor.

The protein resides in the cell membrane. It catalyses the reaction (S)-dihydroorotate + a quinone = orotate + a quinol. It participates in pyrimidine metabolism; UMP biosynthesis via de novo pathway; orotate from (S)-dihydroorotate (quinone route): step 1/1. Catalyzes the conversion of dihydroorotate to orotate with quinone as electron acceptor. The sequence is that of Dihydroorotate dehydrogenase (quinone) from Nitrosomonas europaea (strain ATCC 19718 / CIP 103999 / KCTC 2705 / NBRC 14298).